The following is a 164-amino-acid chain: Urocortin-3 (164 aa).

The first 23 residues, 1–23, serve as a signal peptide directing secretion; the sequence is MLMPTYFLLPLLLLLGGPRTSLS. A propeptide spanning residues 24–121 is cleaved from the precursor; that stretch reads HKFYNTGPVF…PDKPKSDRGT (98 aa). Positions 58–120 are disordered; the sequence is SFGHLPTQDP…YPDKPKSDRG (63 aa). Residues 110–120 are compositionally biased toward basic and acidic residues; that stretch reads LYPDKPKSDRG. Isoleucine 160 carries the post-translational modification Isoleucine amide.

The protein belongs to the sauvagine/corticotropin-releasing factor/urotensin I family. Binds with high affinity to CRF receptors 2-alpha and 2-beta. As to expression, expressed in some areas of the brain including the hypothalamus, amygdala, and brainstem, but is not evident in the cerebellum, pituitary, or cerebral cortex; it is also expressed peripherally in small intestine and skin.

The protein localises to the secreted. In terms of biological role, suppresses food intake, delays gastric emptying and decreases heat-induced edema. Might represent an endogenous ligand for maintaining homeostasis after stress. The sequence is that of Urocortin-3 (Ucn3) from Mus musculus (Mouse).